A 24-amino-acid polypeptide reads, in one-letter code: Humanin-like 9 (24 aa).

It belongs to the humanin family. In terms of tissue distribution, highly expressed in the kidney, heart muscle and testis.

Its subcellular location is the secreted. The protein localises to the cytoplasm. Its function is as follows. Plays a role as a neuroprotective and antiapoptotic factor. This Homo sapiens (Human) protein is Humanin-like 9.